The sequence spans 210 residues: ATP-dependent Clp protease proteolytic subunit (210 aa).

Catalysis depends on serine 106, which acts as the Nucleophile. Residue histidine 131 is part of the active site.

It belongs to the peptidase S14 family. In terms of assembly, fourteen ClpP subunits assemble into 2 heptameric rings which stack back to back to give a disk-like structure with a central cavity, resembling the structure of eukaryotic proteasomes.

It is found in the cytoplasm. The catalysed reaction is Hydrolysis of proteins to small peptides in the presence of ATP and magnesium. alpha-casein is the usual test substrate. In the absence of ATP, only oligopeptides shorter than five residues are hydrolyzed (such as succinyl-Leu-Tyr-|-NHMec, and Leu-Tyr-Leu-|-Tyr-Trp, in which cleavage of the -Tyr-|-Leu- and -Tyr-|-Trp bonds also occurs).. Functionally, cleaves peptides in various proteins in a process that requires ATP hydrolysis. Has a chymotrypsin-like activity. Plays a major role in the degradation of misfolded proteins. The chain is ATP-dependent Clp protease proteolytic subunit from Bartonella quintana (strain Toulouse) (Rochalimaea quintana).